A 413-amino-acid polypeptide reads, in one-letter code: Dual-specificity RNA methyltransferase RlmN (413 aa).

Glu126 acts as the Proton acceptor in catalysis. The 250-residue stretch at 132-381 (EEGRGTLCIS…IRTPRGRDIL (250 aa)) folds into the Radical SAM core domain. Cysteines 139 and 384 form a disulfide. [4Fe-4S] cluster contacts are provided by Cys146, Cys150, and Cys153. Residues 210 to 211 (GE), Ser242, 264 to 266 (SLH), and Asn341 contribute to the S-adenosyl-L-methionine site. Cys384 (S-methylcysteine intermediate) is an active-site residue.

The protein belongs to the radical SAM superfamily. RlmN family. [4Fe-4S] cluster serves as cofactor.

The protein resides in the cytoplasm. It catalyses the reaction adenosine(2503) in 23S rRNA + 2 reduced [2Fe-2S]-[ferredoxin] + 2 S-adenosyl-L-methionine = 2-methyladenosine(2503) in 23S rRNA + 5'-deoxyadenosine + L-methionine + 2 oxidized [2Fe-2S]-[ferredoxin] + S-adenosyl-L-homocysteine. The enzyme catalyses adenosine(37) in tRNA + 2 reduced [2Fe-2S]-[ferredoxin] + 2 S-adenosyl-L-methionine = 2-methyladenosine(37) in tRNA + 5'-deoxyadenosine + L-methionine + 2 oxidized [2Fe-2S]-[ferredoxin] + S-adenosyl-L-homocysteine. Functionally, specifically methylates position 2 of adenine 2503 in 23S rRNA and position 2 of adenine 37 in tRNAs. m2A2503 modification seems to play a crucial role in the proofreading step occurring at the peptidyl transferase center and thus would serve to optimize ribosomal fidelity. The sequence is that of Dual-specificity RNA methyltransferase RlmN from Sinorhizobium medicae (strain WSM419) (Ensifer medicae).